A 258-amino-acid polypeptide reads, in one-letter code: 5'-nucleotidase SurE (258 aa).

Residues Asp-8, Asp-9, Ser-40, and Asn-93 each contribute to the a divalent metal cation site.

The protein belongs to the SurE nucleotidase family. The cofactor is a divalent metal cation.

The protein resides in the cytoplasm. The catalysed reaction is a ribonucleoside 5'-phosphate + H2O = a ribonucleoside + phosphate. Its function is as follows. Nucleotidase that shows phosphatase activity on nucleoside 5'-monophosphates. The sequence is that of 5'-nucleotidase SurE from Afipia carboxidovorans (strain ATCC 49405 / DSM 1227 / KCTC 32145 / OM5) (Oligotropha carboxidovorans).